We begin with the raw amino-acid sequence, 339 residues long: D-erythrose-4-phosphate dehydrogenase (339 aa).

NAD(+)-binding positions include 12 to 13 and Arg81; that span reads RI. Substrate contacts are provided by residues 154 to 156, Arg200, 213 to 214, and Arg236; these read SCT and TK. Cys155 acts as the Nucleophile in catalysis. Asn318 provides a ligand contact to NAD(+).

Belongs to the glyceraldehyde-3-phosphate dehydrogenase family. Epd subfamily. As to quaternary structure, homotetramer.

Its subcellular location is the cytoplasm. It catalyses the reaction D-erythrose 4-phosphate + NAD(+) + H2O = 4-phospho-D-erythronate + NADH + 2 H(+). Its pathway is cofactor biosynthesis; pyridoxine 5'-phosphate biosynthesis; pyridoxine 5'-phosphate from D-erythrose 4-phosphate: step 1/5. Catalyzes the NAD-dependent conversion of D-erythrose 4-phosphate to 4-phosphoerythronate. The chain is D-erythrose-4-phosphate dehydrogenase from Shigella dysenteriae serotype 1 (strain Sd197).